The primary structure comprises 365 residues: Inositol 4-methyltransferase (365 aa).

An S-adenosyl-L-methionine-binding site is contributed by aspartate 232. Histidine 270 (proton acceptor) is an active-site residue.

It belongs to the class I-like SAM-binding methyltransferase superfamily. Cation-independent O-methyltransferase family. Leaves and roots. The levels found in the leaves are 25 times greater than in the roots.

It carries out the reaction myo-inositol + S-adenosyl-L-methionine = 1D-4-O-methyl-myo-inositol + S-adenosyl-L-homocysteine + H(+). Its pathway is polyol metabolism; myo-inositol metabolism. Functionally, catalyzes the methylation of myo-inositol into ononitol (1D-4-O-methyl myo-inositol), the first step in the biosynthesis of the cyclic sugar pinitol which has osmoprotective properties. The sequence is that of Inositol 4-methyltransferase (IMT1) from Mesembryanthemum crystallinum (Common ice plant).